Here is a 180-residue protein sequence, read N- to C-terminus: Translation initiation factor IF-3 (180 aa).

Belongs to the IF-3 family. Monomer.

It localises to the cytoplasm. In terms of biological role, IF-3 binds to the 30S ribosomal subunit and shifts the equilibrium between 70S ribosomes and their 50S and 30S subunits in favor of the free subunits, thus enhancing the availability of 30S subunits on which protein synthesis initiation begins. This is Translation initiation factor IF-3 from Escherichia coli (strain K12 / MC4100 / BW2952).